A 570-amino-acid polypeptide reads, in one-letter code: CDKN2A-interacting protein (570 aa).

Ala-2 carries the N-acetylalanine modification. In terms of domain architecture, XRN2-binding (XTBD) spans 19–126 (VETLRCEGET…KVKKRGISSS (108 aa)). A disordered region spans residues 122–345 (GISSSNEGVE…TSLLMPKSSS (224 aa)). A Phosphoserine modification is found at Ser-124. A compositionally biased stretch (basic and acidic residues) spans 147-162 (VERDHGKKSAKTDRSA). The segment covering 167–183 (SSGSKGSSTKSESSGTS) has biased composition (low complexity). Residue Lys-176 forms a Glycyl lysine isopeptide (Lys-Gly) (interchain with G-Cter in SUMO1) linkage. The segment covering 184-198 (ARSNSGVSHQNSSTS) has biased composition (polar residues). Positions 203 to 221 (SVCSQSSSNSSQVTSAGSG) are enriched in low complexity. Basic and acidic residues predominate over residues 224–233 (SEPEAPDKHG). A Phosphoserine modification is found at Ser-234. Low complexity-rich tracts occupy residues 234 to 248 (SASFVSSLLKSSLNS) and 271 to 301 (SSVSVSQSSSEIEVPLLGSSGSSEVELPLLS). Residues 302-317 (CKSSSETASSGLTTKA) are compositionally biased toward polar residues. Positions 318–345 (SSEANISSSVSKNSSSSGTSLLMPKSSS) are enriched in low complexity. Ser-378 bears the Phosphoserine mark. Positions 383 to 407 (SQLASKSSSQSSTSQLPSKSTSQSS) are disordered. The region spanning 452 to 527 (NHGELLNAAI…SREALKLFLK (76 aa)) is the DRBM domain.

It belongs to the CARF family. Interacts with CDKN2A/p14ARF, p53/TP53 and MDM2. Interacts with CHEK2 and MAPK3. Interacts with XRN2. May be ubiquitinated.

The protein resides in the nucleus. The protein localises to the nucleoplasm. In terms of biological role, regulates DNA damage response and cell proliferation in a dose-dependent manner through a number of signaling pathways involved in cell proliferation, apoptosis and senescence. This chain is CDKN2A-interacting protein (Cdkn2aip), found in Rattus norvegicus (Rat).